The following is a 452-amino-acid chain: Pup--protein ligase (452 aa).

E9 is a Mg(2+) binding site. R53 provides a ligand contact to ATP. Residue Y55 coordinates Mg(2+). D57 functions as the Proton acceptor in the catalytic mechanism. E63 is a Mg(2+) binding site. Residues T66 and W419 each contribute to the ATP site.

This sequence belongs to the Pup ligase/Pup deamidase family. Pup-conjugating enzyme subfamily.

It catalyses the reaction ATP + [prokaryotic ubiquitin-like protein]-L-glutamate + [protein]-L-lysine = ADP + phosphate + N(6)-([prokaryotic ubiquitin-like protein]-gamma-L-glutamyl)-[protein]-L-lysine.. It functions in the pathway protein degradation; proteasomal Pup-dependent pathway. It participates in protein modification; protein pupylation. Its function is as follows. Catalyzes the covalent attachment of the prokaryotic ubiquitin-like protein modifier Pup to the proteasomal substrate proteins, thereby targeting them for proteasomal degradation. This tagging system is termed pupylation. The ligation reaction involves the side-chain carboxylate of the C-terminal glutamate of Pup and the side-chain amino group of a substrate lysine. The protein is Pup--protein ligase of Nakamurella multipartita (strain ATCC 700099 / DSM 44233 / CIP 104796 / JCM 9543 / NBRC 105858 / Y-104) (Microsphaera multipartita).